An 800-amino-acid chain; its full sequence is Aldehyde dehydrogenase family 16 member A1 (800 aa).

Belongs to the aldehyde dehydrogenase family. In terms of assembly, interacts with SPG21.

The sequence is that of Aldehyde dehydrogenase family 16 member A1 (ALDH16A1) from Bos taurus (Bovine).